Here is a 174-residue protein sequence, read N- to C-terminus: I-Kappa-B like protein C1 (174 aa).

2 ANK repeats span residues 56 to 88 and 93 to 123; these read RGRQ…DINA and TGNS…NLGA.

This sequence belongs to the polydnaviridae I-Kappa-B-like protein family.

Suppresses the host immune response through NF-kappa-B inactivation. Possesses ankyrin repeat domains required for NF-kappa-B binding but lacks the regulatory regions required for dissociation from NF-kappa-B and degradation. Therefore, prevents host NF-kappa-B release and subsequent activation. This is I-Kappa-B like protein C1 (C1) from Microplitis demolitor bracovirus (isolate Webb) (MdBV).